A 553-amino-acid polypeptide reads, in one-letter code: MDIFRILSRGASINKKKDQTSTNSSLIKLSLPSTANKHEHLLDEVERETDFFRTKSHRKLDEPSSKILKSKNKDEERESVAEIVPPLELESEEDARVFRNLHKSKVTGDDIPIPIGSFQDMIGRFKIDKRVLSNLLDAEFVEPTPIQCEAIPITLANRDLIACAPTGSGKTLAFLIPLLQQLVSQNVLKNHGIRGLIISPTNELAVQIFQQLEIISKGKGLNIAILSKQLAGKISNDVVKASKYDILVSTPLRLIDVVKLGKVDLSKVTQLVIDEADKLFDHGFAEQTDELLSHCTNVKIRKSMFSATIPSGVEEMAHSIMKDPIRVIIGHKEAASNTIEQKLVFTGNEEGKLLAIRQMIQNGEFKPPIIIFLQSITRAKALFHELVYDKLNVDVIHAERTPKQRDEVIKRFKNGDIWVLITTDVLARGVDFKGVNMVINYDVPQSAQAYVHRIGRTGRGGRSGKAVTFFTKEDDKAVKPIINVMKQSGCTDGLSDWMEDLGKLSKREKRAVKTHEIERKKISTVPSVIKQKRKQRQNMIEASKRRKQAESEQ.

Residues 120 to 148 (DMIGRFKIDKRVLSNLLDAEFVEPTPIQC) carry the Q motif motif. Positions 151-327 (IPITLANRDL…HSIMKDPIRV (177 aa)) constitute a Helicase ATP-binding domain. 164 to 171 (APTGSGKT) contributes to the ATP binding site. A DEAD box motif is present at residues 274–277 (DEAD). Residues 338–502 (TIEQKLVFTG…GLSDWMEDLG (165 aa)) form the Helicase C-terminal domain. The segment at 528-553 (VIKQKRKQRQNMIEASKRRKQAESEQ) is disordered.

This sequence belongs to the DEAD box helicase family. DDX52/ROK1 subfamily. In terms of assembly, interacts with the U3 snoRNA and is associated with the 90S and 40S pre-ribosomes.

It is found in the nucleus. The protein localises to the nucleolus. It catalyses the reaction ATP + H2O = ADP + phosphate + H(+). Functionally, ATP-dependent RNA helicase involved in 40S ribosomal subunit biogenesis. Required for the processing and cleavage of 35S pre-rRNA at sites A0, A1, and A2, leading to mature 18S rRNA. This is ATP-dependent RNA helicase ROK1 (ROK1) from Lodderomyces elongisporus (strain ATCC 11503 / CBS 2605 / JCM 1781 / NBRC 1676 / NRRL YB-4239) (Yeast).